Consider the following 95-residue polypeptide: Co-chaperonin GroES (95 aa).

The protein belongs to the GroES chaperonin family. As to quaternary structure, heptamer of 7 subunits arranged in a ring. Interacts with the chaperonin GroEL.

It localises to the cytoplasm. In terms of biological role, together with the chaperonin GroEL, plays an essential role in assisting protein folding. The GroEL-GroES system forms a nano-cage that allows encapsulation of the non-native substrate proteins and provides a physical environment optimized to promote and accelerate protein folding. GroES binds to the apical surface of the GroEL ring, thereby capping the opening of the GroEL channel. In Rickettsia felis (strain ATCC VR-1525 / URRWXCal2) (Rickettsia azadi), this protein is Co-chaperonin GroES.